The chain runs to 169 residues: Lipoprotein signal peptidase (169 aa).

The next 2 membrane-spanning stretches (helical) occupy residues 59–79 and 84–104; these read PTVLLLLTGVITIMVLAYVIW and TTLFLLPFALITGGGIGNMID. Residues aspartate 113 and aspartate 139 contribute to the active site. A helical transmembrane segment spans residues 132-152; that stretch reads WPIFNIADSAITIGACMLMIF.

This sequence belongs to the peptidase A8 family.

It localises to the cell inner membrane. The catalysed reaction is Release of signal peptides from bacterial membrane prolipoproteins. Hydrolyzes -Xaa-Yaa-Zaa-|-(S,diacylglyceryl)Cys-, in which Xaa is hydrophobic (preferably Leu), and Yaa (Ala or Ser) and Zaa (Gly or Ala) have small, neutral side chains.. The protein operates within protein modification; lipoprotein biosynthesis (signal peptide cleavage). This protein specifically catalyzes the removal of signal peptides from prolipoproteins. The protein is Lipoprotein signal peptidase of Pelodictyon phaeoclathratiforme (strain DSM 5477 / BU-1).